The sequence spans 490 residues: ATP synthase subunit beta, plastid (490 aa).

170-177 is an ATP binding site; sequence GGAGVGKT.

The protein belongs to the ATPase alpha/beta chains family. In terms of assembly, F-type ATPases have 2 components, CF(1) - the catalytic core - and CF(0) - the membrane proton channel. CF(1) has five subunits: alpha(3), beta(3), gamma(1), delta(1), epsilon(1). CF(0) has four main subunits: a(1), b(1), b'(1) and c(9-12).

It localises to the plastid membrane. It carries out the reaction ATP + H2O + 4 H(+)(in) = ADP + phosphate + 5 H(+)(out). Produces ATP from ADP in the presence of a proton gradient across the membrane. The catalytic sites are hosted primarily by the beta subunits. This Cuscuta exaltata (Tall dodder) protein is ATP synthase subunit beta, plastid.